A 264-amino-acid chain; its full sequence is Thiazole synthase (264 aa).

Catalysis depends on K98, which acts as the Schiff-base intermediate with DXP. 1-deoxy-D-xylulose 5-phosphate contacts are provided by residues G159, 185 to 186 (AG), and 207 to 208 (AS).

It belongs to the ThiG family. In terms of assembly, homotetramer. Forms heterodimers with either ThiH or ThiS.

Its subcellular location is the cytoplasm. It catalyses the reaction [ThiS sulfur-carrier protein]-C-terminal-Gly-aminoethanethioate + 2-iminoacetate + 1-deoxy-D-xylulose 5-phosphate = [ThiS sulfur-carrier protein]-C-terminal Gly-Gly + 2-[(2R,5Z)-2-carboxy-4-methylthiazol-5(2H)-ylidene]ethyl phosphate + 2 H2O + H(+). Its pathway is cofactor biosynthesis; thiamine diphosphate biosynthesis. Its function is as follows. Catalyzes the rearrangement of 1-deoxy-D-xylulose 5-phosphate (DXP) to produce the thiazole phosphate moiety of thiamine. Sulfur is provided by the thiocarboxylate moiety of the carrier protein ThiS. In vitro, sulfur can be provided by H(2)S. The polypeptide is Thiazole synthase (Streptomyces griseus subsp. griseus (strain JCM 4626 / CBS 651.72 / NBRC 13350 / KCC S-0626 / ISP 5235)).